Reading from the N-terminus, the 307-residue chain is Chaperone protein DnaJ 2 (307 aa).

The region spanning 6-71 (NYYQILGVPR…TKRRELDSRL (66 aa)) is the J domain. Residues 69–133 (SRLFGRFRRP…TRRTKVVSPA (65 aa)) are disordered. Residues 88–99 (NGGRSPNGTSVN) are compositionally biased toward polar residues. Residues 100–114 (GQVRTPTGRTGTRQP) are compositionally biased toward low complexity.

The protein belongs to the DnaJ family. Homodimer. Zn(2+) serves as cofactor.

It is found in the cytoplasm. Functionally, participates actively in the response to hyperosmotic and heat shock by preventing the aggregation of stress-denatured proteins and by disaggregating proteins, also in an autonomous, DnaK-independent fashion. Unfolded proteins bind initially to DnaJ; upon interaction with the DnaJ-bound protein, DnaK hydrolyzes its bound ATP, resulting in the formation of a stable complex. GrpE releases ADP from DnaK; ATP binding to DnaK triggers the release of the substrate protein, thus completing the reaction cycle. Several rounds of ATP-dependent interactions between DnaJ, DnaK and GrpE are required for fully efficient folding. Also involved, together with DnaK and GrpE, in the DNA replication of plasmids through activation of initiation proteins. This chain is Chaperone protein DnaJ 2 (dnaJ2), found in Synechocystis sp. (strain ATCC 27184 / PCC 6803 / Kazusa).